Reading from the N-terminus, the 212-residue chain is tRNA (guanine-N(7)-)-methyltransferase (212 aa).

4 residues coordinate S-adenosyl-L-methionine: Glu44, Asp69, Asp96, and Asp118. Asp118 is a catalytic residue. Lys122 provides a ligand contact to substrate. The tract at residues 124–129 (RHEKRR) is interaction with RNA. Residues Asp154 and 191 to 194 (TEYE) contribute to the substrate site.

Belongs to the class I-like SAM-binding methyltransferase superfamily. TrmB family.

It catalyses the reaction guanosine(46) in tRNA + S-adenosyl-L-methionine = N(7)-methylguanosine(46) in tRNA + S-adenosyl-L-homocysteine. It functions in the pathway tRNA modification; N(7)-methylguanine-tRNA biosynthesis. Functionally, catalyzes the formation of N(7)-methylguanine at position 46 (m7G46) in tRNA. The sequence is that of tRNA (guanine-N(7)-)-methyltransferase from Streptococcus suis (strain 05ZYH33).